Reading from the N-terminus, the 519-residue chain is Tachykinin-like peptides receptor 99D (519 aa).

The Extracellular portion of the chain corresponds to 1 to 100; it reads MENRSDFEAD…SFAFVVPWWR (100 aa). Residues Asn3, Asn19, Asn22, and Asn61 are each glycosylated (N-linked (GlcNAc...) asparagine). The chain crosses the membrane as a helical span at residues 101 to 123; the sequence is QVLWSILFGGMVIVATGGNLIVV. The Cytoplasmic segment spans residues 124-134; the sequence is WIVMTTKRMRT. A helical transmembrane segment spans residues 135 to 155; the sequence is VTNYFIVNLSIADAMVSSLNV. Topologically, residues 156–175 are extracellular; that stretch reads TFNYYYMLDSDWPFGEFYCK. A disulfide bridge links Cys174 with Cys254. The chain crosses the membrane as a helical span at residues 176–197; the sequence is LSQFIAMLSICASVFTLMAISI. The Cytoplasmic portion of the chain corresponds to 198 to 217; that stretch reads DRYVAIIRPLQPRMSKRCNL. A helical membrane pass occupies residues 218–238; that stretch reads AIAAVIWLASTLISCPMMIIY. Over 239–270 the chain is Extracellular; it reads RTEEVPVRGLSNRTVCYPEWPDGPTNHSTMES. Residues 271 to 292 traverse the membrane as a helical segment; that stretch reads LYNILIIILTYFLPIVSMTVTY. Over 293 to 324 the chain is Cytoplasmic; it reads SRVGIELWGSKTIGECTPRQVENVRSKRRVVK. Residues 325-346 traverse the membrane as a helical segment; that stretch reads MMIVVVLIFAICWLPFHSYFII. Over 347 to 361 the chain is Extracellular; it reads TSCYPAITEAPFIQE. A helical membrane pass occupies residues 362 to 384; sequence LYLAIYWLAMSNSMYNPIIYCWM. Residues 385 to 519 are Cytoplasmic-facing; that stretch reads NSRFRYGFKM…STANTTQLLS (135 aa). Cys399 is lipidated: S-palmitoyl cysteine. Residues 444 to 519 form a disordered region; that stretch reads PSSPKSHRIS…STANTTQLLS (76 aa). 2 stretches are compositionally biased toward polar residues: residues 454-465 and 487-499; these read HSGTGRSATLRN and SYQQ…WSGP. Over residues 500-519 the composition is skewed to low complexity; sequence NSATAVTNSSSTANTTQLLS.

This sequence belongs to the G-protein coupled receptor 1 family. As to expression, during late embryogenesis (stages 11-15), expressed in the brain and in a specific subset of neurons in each neuromere of the developing ventral ganglion. Expressed in the cortex of the adult brain, which contains the neuronal cell bodies.

It is found in the cell membrane. Receptor for tachykinin-like peptides. This chain is Tachykinin-like peptides receptor 99D (TkR99D), found in Drosophila melanogaster (Fruit fly).